Reading from the N-terminus, the 305-residue chain is Glycine--tRNA ligase alpha subunit (305 aa).

The protein belongs to the class-II aminoacyl-tRNA synthetase family. In terms of assembly, tetramer of two alpha and two beta subunits.

The protein resides in the cytoplasm. It catalyses the reaction tRNA(Gly) + glycine + ATP = glycyl-tRNA(Gly) + AMP + diphosphate. This chain is Glycine--tRNA ligase alpha subunit, found in Streptococcus gordonii (strain Challis / ATCC 35105 / BCRC 15272 / CH1 / DL1 / V288).